The following is a 174-amino-acid chain: Crossover junction endodeoxyribonuclease RuvC (174 aa).

Active-site residues include Asp-16, Glu-76, and Asp-148. 3 residues coordinate Mg(2+): Asp-16, Glu-76, and Asp-148.

This sequence belongs to the RuvC family. As to quaternary structure, homodimer which binds Holliday junction (HJ) DNA. The HJ becomes 2-fold symmetrical on binding to RuvC with unstacked arms; it has a different conformation from HJ DNA in complex with RuvA. In the full resolvosome a probable DNA-RuvA(4)-RuvB(12)-RuvC(2) complex forms which resolves the HJ. Requires Mg(2+) as cofactor.

Its subcellular location is the cytoplasm. The enzyme catalyses Endonucleolytic cleavage at a junction such as a reciprocal single-stranded crossover between two homologous DNA duplexes (Holliday junction).. Its function is as follows. The RuvA-RuvB-RuvC complex processes Holliday junction (HJ) DNA during genetic recombination and DNA repair. Endonuclease that resolves HJ intermediates. Cleaves cruciform DNA by making single-stranded nicks across the HJ at symmetrical positions within the homologous arms, yielding a 5'-phosphate and a 3'-hydroxyl group; requires a central core of homology in the junction. The consensus cleavage sequence is 5'-(A/T)TT(C/G)-3'. Cleavage occurs on the 3'-side of the TT dinucleotide at the point of strand exchange. HJ branch migration catalyzed by RuvA-RuvB allows RuvC to scan DNA until it finds its consensus sequence, where it cleaves and resolves the cruciform DNA. The protein is Crossover junction endodeoxyribonuclease RuvC of Rhodopseudomonas palustris (strain ATCC BAA-98 / CGA009).